The chain runs to 469 residues: GTPase Der (469 aa).

2 EngA-type G domains span residues 3–166 and 177–350; these read PVIA…PEDE and LRLA…ESAN. Residues 9-16, 56-60, 118-121, 183-190, 230-234, and 295-298 each bind GTP; these read GRPNVGKS, DTGGI, NKVD, DTAGV, and NKWD. Residues 351-435 form the KH-like domain; it reads LKVSPAKLTQ…PVKIEFKTSE (85 aa).

The protein belongs to the TRAFAC class TrmE-Era-EngA-EngB-Septin-like GTPase superfamily. EngA (Der) GTPase family. Associates with the 50S ribosomal subunit.

In terms of biological role, GTPase that plays an essential role in the late steps of ribosome biogenesis. The sequence is that of GTPase Der from Acinetobacter baumannii (strain ACICU).